Here is a 96-residue protein sequence, read N- to C-terminus: MGLSFSGARPCCCRNNVLITDDGEVVSLTAHDFDVVDIESEEEGNFYVPPDMRGVTRAPGRQRLRSSDPPSRHTHRRTPGGACPATQFPPPMSDSE.

G2 carries N-myristoyl glycine; by host lipidation. A Di-leucine-like internalization motif motif is present at residues 18 to 19 (LI). The tract at residues 37 to 43 (DIESEEE) is asp/Glu-rich (acidic). S40 carries the phosphoserine modification. Positions 44-96 (GNFYVPPDMRGVTRAPGRQRLRSSDPPSRHTHRRTPGGACPATQFPPPMSDSE) are disordered. The segment covering 87 to 96 (QFPPPMSDSE) has biased composition (pro residues).

Belongs to the herpesviridae cytoplasmic envelopment protein 3 family. As to quaternary structure, interacts with cytoplasmic envelopment protein 2; this interaction is essential for the proper localization of each protein to the assembly complex and thus for the production of infectious virus. Interacts with gE (via C-terminus). Interacts with gD (via C-terminus). Interacts with UL56. Post-translationally, myristoylation and palmitoylation (probably on one or more of the nearby cysteines at the N-terminus) enable membrane-binding and Golgi apparatus-specific targeting and are essential for efficient packaging. Phosphorylated. Phosphorylation does not seem to be required for recycling to the host Golgi apparatus. Packaging is selective for underphosphorylated forms.

It is found in the virion tegument. Its subcellular location is the virion membrane. The protein localises to the host cell membrane. The protein resides in the host Golgi apparatus membrane. Plays an important role in the cytoplasmic envelopment of tegument proteins and capsids during the assembly and egress processes. Also participates in viral entry at the fusion step probably by regulating the core fusion machinery. This is Cytoplasmic envelopment protein 3 from Homo sapiens (Human).